Reading from the N-terminus, the 409-residue chain is Pleckstrin homology domain-containing family O member 1 (409 aa).

The interval 1–24 (MMKKNNSAKRGPQDGNQQPAPPEK) is disordered. The PH domain maps to 21-132 (PPEKVGWVRK…WINALNSAIT (112 aa)). Positions 133–193 (RAKNRILDEV…MLTLDLIQEE (61 aa)) are interaction with capping proteins (CPs). An interaction with ATM, CKIP, IFP35 and NMI region spans residues 136–308 (NRILDEVTVE…LPNPGQLSRI (173 aa)). The tract at residues 218–267 (LAGSRRRADSDRIQPSADRASSLSRPWEKTDKGATYTPQAPKKLTPTEKG) is disordered. Ser-227 and Ser-271 each carry phosphoserine. The interval 308–409 (IQDLVARKLE…PHSQYRKSLM (102 aa)) is negative regulator of AP-1 activity. Disordered stretches follow at residues 325–350 (EVQGLGDGKRKAKDPPRSPPDSESEQ) and 390–409 (TPDSHLRQTTPHSQYRKSLM). Residues 331-340 (DGKRKAKDPP) are compositionally biased toward basic and acidic residues. Residue Ser-342 is modified to Phosphoserine. Residues 390–402 (TPDSHLRQTTPHS) show a composition bias toward polar residues.

In terms of assembly, heterodimer or homodimer. Interacts with CK2 and actin capping subunits (capping protein CP-alpha and CP-beta). CKIP1 and CK2 together inhibit the activity of actin capping protein at the barbed ends of actin filaments. Interacts with ATM, IFP35, JUN, JUND, NMI and PI3K. Interacts with AKT1, AKT2 and AKT3 (each isozyme of PKB), PtdIns(3,5)P2, PtdIns(4,5)P2 and PtdIns(3,4,5)P2. In terms of processing, C-terminal fragments could be released during apoptosis via caspase-3-dependent cleavage. In terms of tissue distribution, abundantly expressed in skeletal muscle and heart, moderately in kidney, liver, brain and placenta and sparingly in the pancreas and lung. Easily detectable in cell lines such as MOLT-4, HEK293 and Jurkat.

The protein localises to the cell membrane. The protein resides in the nucleus. Its subcellular location is the cytoplasm. Plays a role in the regulation of the actin cytoskeleton through its interactions with actin capping protein (CP). May function to target CK2 to the plasma membrane thereby serving as an adapter to facilitate the phosphorylation of CP by protein kinase 2 (CK2). Appears to target ATM to the plasma membrane. Appears to also inhibit tumor cell growth by inhibiting AKT-mediated cell-survival. Also implicated in PI3K-regulated muscle differentiation, the regulation of AP-1 activity (plasma membrane bound AP-1 regulator that translocates to the nucleus) and the promotion of apoptosis induced by tumor necrosis factor TNF. When bound to PKB, it inhibits it probably by decreasing PKB level of phosphorylation. This is Pleckstrin homology domain-containing family O member 1 (PLEKHO1) from Homo sapiens (Human).